A 589-amino-acid polypeptide reads, in one-letter code: 3-(3-hydroxy-phenyl)propionate/3-hydroxycinnamic acid hydroxylase (589 aa).

Residues 15–44 and 283–293 each bind FAD; these read DVLI…VAEK and FRVDRILLAGD.

The protein belongs to the PheA/TfdB FAD monooxygenase family. FAD serves as cofactor.

It carries out the reaction 3-(3-hydroxyphenyl)propanoate + NADH + O2 + H(+) = 3-(2,3-dihydroxyphenyl)propanoate + NAD(+) + H2O. The enzyme catalyses (2E)-3-(3-hydroxyphenyl)prop-2-enoate + NADH + O2 + H(+) = (2E)-3-(2,3-dihydroxyphenyl)prop-2-enoate + NAD(+) + H2O. It participates in aromatic compound metabolism; 3-phenylpropanoate degradation. Catalyzes the insertion of one atom of molecular oxygen into position 2 of the phenyl ring of 3-(3-hydroxyphenyl)propionate (3-HPP) and hydroxycinnamic acid (3HCI). This Comamonas testosteroni (Pseudomonas testosteroni) protein is 3-(3-hydroxy-phenyl)propionate/3-hydroxycinnamic acid hydroxylase.